The following is a 314-amino-acid chain: Deoxymugineic acid synthase 1 (314 aa).

D44 is a binding site for NADP(+). Y49 functions as the Proton donor in the catalytic mechanism. Residue H112 participates in substrate binding. NADP(+)-binding positions include 158–159 (CN), Q180, 258–266 (FDEGRMKEN), and 273–281 (ELSEEERQR).

It belongs to the aldo/keto reductase family.

It catalyses the reaction 2'-deoxymugineate + NAD(+) = 3''-deamino-3''-oxonicotianamine + NADH + H(+). The enzyme catalyses 2'-deoxymugineate + NADP(+) = 3''-deamino-3''-oxonicotianamine + NADPH + H(+). Its pathway is siderophore biosynthesis. Catalyzes the reduction of a 3''-keto intermediate during the biosynthesis of 2'-deoxymugineic acid (DMA) from L-Met. Involved in the formation of phytosiderophores (MAs) belonging to the mugineic acid family and required to acquire iron. The protein is Deoxymugineic acid synthase 1 of Zea mays (Maize).